Consider the following 212-residue polypeptide: Ribonuclease HII (212 aa).

An RNase H type-2 domain is found at 17–206 (RVIAGVDEAG…KSTKPQSLQT (190 aa)). D23, E24, and D115 together coordinate a divalent metal cation.

Belongs to the RNase HII family. Mn(2+) is required as a cofactor. Mg(2+) serves as cofactor.

The protein localises to the cytoplasm. The enzyme catalyses Endonucleolytic cleavage to 5'-phosphomonoester.. In terms of biological role, endonuclease that specifically degrades the RNA of RNA-DNA hybrids. The sequence is that of Ribonuclease HII from Syntrophus aciditrophicus (strain SB).